A 1018-amino-acid polypeptide reads, in one-letter code: MEPREVKDRILENISLSVKKLQSYFAACEDETPAIRNHDKVLQRLCEHLDHALLYGLQDLSSGYWVLVVHFTRREAIRQIEVLQHVATNLGRSRAWLYLALNENSLESYLRLFQENLGLLQKYYVRNALVCSHDHLTLFLTLVSGLEFIRFDLDLDAPYLDLAPYMPDYYKPQYLLDFEDRLPSSVHGSDSLSLNSFNSVTSTNLEWDDSAIAPSSEDGDLTDTISGPRSTASDLTSSKTSTKSPTQRHNPFNEEQAETASSDTTPVHTTSQEKEEAQAPDQPDACTELEVIRVTKKKKIGKKKKTKLDEDASPLHPTSSQQKCGQQGEGDGLVGTPGLARDPSDTVLASPQEQGEGLSSTAGSSELSELSQMGLLIPEMKDTSMECLGQPLSKVIDKLHGQLDPSTWCSHADPPEQSFRAGSPGEAPEKPPFCDFSEGLPAPMDFYRFTVESPSTVAPGGGHHDPPGPSQPLHVPGSPAAALQEEEEGGRGEGQTSQPVEDRQGEEIQEPEPQEPDSQLPLVSQEPLVSQEPVPEPVSQPEPGTHEALCKLKRDQPSPCLSSAEDSGVEEGQGSPSEMTHPSEFRVDNNHLLLLMIHVFRENEEQLFKMIRMSTGHMEGNLQLLYVLLTDCYVYLLRKGATEKPYLVEEAVSYNELDYVSVGLDQQTVKLVCTNRRKQFLLDTADVALAELFLASLKSAMIKGCREPPYPSILTDATMEKLALAKFVAQESKCEASAVTVHFYGLVHWEDPMEEALGPVPCQCSPAEGTITKEGMLHYKASTSYLGKEHWKACFVVLSNGILYQYPDRTDVIPLLSVNMGGEQCGGCRRSNTTDRPHAFQVILADRPCLELSADSEAEMADWMQHLCQAVSKGVIPQGIAPSPCIPCCLVITEDRLFTCHEDCQTSFFRSLGTARLADITAISTELGKEYCVLEFSQDSPQLLQPWVIYLSCTSELDRFLTALSSGWKAIYQVDLPHKAIHEASIKQKFEDALSLIHSAWQRSDSLCRGRASRDPWC.

M1 is subject to N-acetylmethionine. The interval 1–289 is interaction with KIF5B; the sequence is MEPREVKDRI…PDQPDACTEL (289 aa). An RUN domain is found at 36–158; the sequence is RNHDKVLQRL…IRFDLDLDAP (123 aa). Disordered stretches follow at residues 210 to 367, 407 to 440, 452 to 520, 526 to 545, and 555 to 583; these read SAIA…SSEL, TWCS…SEGL, ESPS…DSQL, EPLV…EPGT, and DQPS…THPS. The segment covering 230–245 has biased composition (low complexity); the sequence is STASDLTSSKTSTKSP. Positions 258-270 are enriched in polar residues; that stretch reads ETASSDTTPVHTT. The segment covering 294–306 has biased composition (basic residues); that stretch reads VTKKKKIGKKKKT. Composition is skewed to polar residues over residues 316–325 and 347–367; these read HPTSSQQKCG and VLAS…SSEL. S423 carries the post-translational modification Phosphoserine. The PH domain maps to 770-872; the sequence is TITKEGMLHY…WMQHLCQAVS (103 aa).

In terms of assembly, interacts with KLC2 (via TPR repeats). Interacts with KIF5B. Interacts with BORCS5. Interacts (via RUN domain) with ARL8B (GTP-bound form); PLEKHM1 and PLEKHM2 compete for interaction with ARL8B. Interacts with ARL8A.

The protein localises to the cytoplasm. It is found in the lysosome membrane. Plays a role in lysosomes movement and localization at the cell periphery acting as an effector of ARL8B. Required for ARL8B to exert its effects on lysosome location, recruits kinesin-1 to lysosomes and hence direct their movement toward microtubule plus ends. Binding to ARL8B provides a link from lysosomal membranes to plus-end-directed motility. Critical factor involved in NK cell-mediated cytotoxicity. Drives the polarization of cytolytic granules and microtubule-organizing centers (MTOCs) toward the immune synapse between effector NK lymphocytes and target cells. Required for maintenance of the Golgi apparatus organization. May play a role in membrane tubulation. The polypeptide is Pleckstrin homology domain-containing family M member 2 (Mus musculus (Mouse)).